The chain runs to 94 residues: Cell division protein CrgA (94 aa).

The next 2 helical transmembrane spans lie at 31–51 (VWFV…LLVF) and 71–91 (LGPW…LLTM).

Belongs to the CrgA family.

Its subcellular location is the cell membrane. Functionally, involved in cell division. The sequence is that of Cell division protein CrgA from Mycobacterium sp. (strain JLS).